A 140-amino-acid chain; its full sequence is Putative pre-16S rRNA nuclease (140 aa).

This sequence belongs to the YqgF nuclease family.

It is found in the cytoplasm. Functionally, could be a nuclease involved in processing of the 5'-end of pre-16S rRNA. In Actinobacillus succinogenes (strain ATCC 55618 / DSM 22257 / CCUG 43843 / 130Z), this protein is Putative pre-16S rRNA nuclease.